The chain runs to 837 residues: Endo-1,4-beta-xylanase Z (837 aa).

The first 28 residues, 1–28, serve as a signal peptide directing secretion; that stretch reads MSRKLFSVLLVGLMLMTSLLVTISSTSA. The CBM6 domain maps to 299–420; the sequence is TRIEAEDYDG…PVNIDWFTFG (122 aa). Residues 424-492 form the Dockerin domain; it reads SSTGLGDLNG…ILRIITEFPG (69 aa). The 322-residue stretch at 512 to 833 folds into the GH10 domain; it reads TISGNALRDY…KPAYNAIKEA (322 aa). Glutamate 645 serves as the catalytic Proton donor. Glutamate 754 acts as the Nucleophile in catalysis. Cysteines 783 and 789 form a disulfide.

It belongs to the glycosyl hydrolase 10 (cellulase F) family.

It carries out the reaction Endohydrolysis of (1-&gt;4)-beta-D-xylosidic linkages in xylans.. The chain is Endo-1,4-beta-xylanase Z (xynZ) from Acetivibrio thermocellus (strain ATCC 27405 / DSM 1237 / JCM 9322 / NBRC 103400 / NCIMB 10682 / NRRL B-4536 / VPI 7372) (Clostridium thermocellum).